We begin with the raw amino-acid sequence, 114 residues long: Eukaryotic translation initiation factor 6 (114 aa).

It belongs to the eIF-6 family. As to quaternary structure, monomer. Associates with the 60S ribosomal subunit.

Its subcellular location is the cytoplasm. It localises to the nucleus. The protein resides in the nucleolus. In terms of biological role, binds to the 60S ribosomal subunit and prevents its association with the 40S ribosomal subunit to form the 80S initiation complex in the cytoplasm. May also be involved in ribosome biogenesis. The protein is Eukaryotic translation initiation factor 6 of Trypanosoma cruzi.